Consider the following 154-residue polypeptide: Ubiquitin-conjugating enzyme E2 L3 (154 aa).

In terms of domain architecture, UBC core spans 2–149 (AASRRLMKEL…AEEFTKKYGE (148 aa)). The active-site Glycyl thioester intermediate is the C86. K131 carries the N6-acetyllysine modification.

It belongs to the ubiquitin-conjugating enzyme family. In terms of assembly, interacts with PRKN; involved in ubiquitination and degradation of misfolded proteins. Interacts with UBE3A. Interacts with CCNB1IP1, CBL, ZAP70, RNF19A, RNF19B and RNF144B. Interacts with ARIH1. Interacts with ARIH2 (via RING-type 1). Interacts with NCOA1; they functionally interact to regulate progesterone receptor transcriptional activity. Interacts with NDFIP1 (via N-terminus); the interaction mediates recruitment of UBE2L3 to ITCH and causes MAP3K7 ubiquitination. Post-translationally, ubiquitinated. The alteration of UBE2L3 protein levels during the S-phase of the cell cycle is due to ubiquitin-dependent proteasomal degradation. Autoubiquitinated in vitro.

It localises to the nucleus. It is found in the cytoplasm. It carries out the reaction S-ubiquitinyl-[E1 ubiquitin-activating enzyme]-L-cysteine + [E2 ubiquitin-conjugating enzyme]-L-cysteine = [E1 ubiquitin-activating enzyme]-L-cysteine + S-ubiquitinyl-[E2 ubiquitin-conjugating enzyme]-L-cysteine.. Its pathway is protein modification; protein ubiquitination. Ubiquitin-conjugating enzyme E2 that specifically acts with HECT-type and RBR family E3 ubiquitin-protein ligases. Does not function with most RING-containing E3 ubiquitin-protein ligases because it lacks intrinsic E3-independent reactivity with lysine: in contrast, it has activity with the RBR family E3 enzymes, such as PRKN, RNF31 and ARIH1, that function like RING-HECT hybrids. Accepts ubiquitin from the E1 complex and catalyzes its covalent attachment to other proteins. Mediates ubiquitination by the CUL9-RBX1 complex. In vitro catalyzes 'Lys-11'-linked polyubiquitination. Involved in the selective degradation of short-lived and abnormal proteins. Down-regulated during the S-phase it is involved in progression through the cell cycle. Regulates nuclear hormone receptors transcriptional activity. May play a role in myelopoiesis. The chain is Ubiquitin-conjugating enzyme E2 L3 (UBE2L3) from Pongo abelii (Sumatran orangutan).